Reading from the N-terminus, the 1373-residue chain is Actin cytoskeleton-regulatory complex protein PAN1 (1373 aa).

Residues 116 to 205 (DQKKFEHLFR…EKWANEVKSF (90 aa)) enclose the EH 1 domain. The 36-residue stretch at 149–184 (LTPVTLAEIWSLSDTNKSGSLLFPEFALSLHLCSMA) folds into the EF-hand 1 domain. Disordered regions lie at residues 271-362 (GGGL…QQQS) and 385-409 (AQRT…QPTG). Composition is skewed to low complexity over residues 290 to 309 (TTSF…PLAS) and 341 to 362 (PQQL…QQQS). A compositionally biased stretch (polar residues) spans 389–408 (GPLQSQSTGFQPAPLQSQPT). The EH 2 domain maps to 465-554 (EKSIYDGIFQ…PELIPPSNKY (90 aa)). An EF-hand 2 domain is found at 498-533 (LSRPDLESIWTLADTSDRGKLNKDEFSVAMHLVYRR). Disordered regions lie at residues 562-622 (MKNS…SSSD), 739-758 (SWNP…NGEV), 876-914 (QNSS…RTPE), 931-1089 (RLAK…TAED), 1103-1335 (EAVP…APPV), and 1349-1373 (GKSL…TVLS). The span at 571 to 580 (NNKSYSGGKQ) shows a compositional bias: polar residues. Residues 581–590 (TKSDGTRFKN) are compositionally biased toward basic and acidic residues. Residues 739–752 (SWNPDSNESEIQGT) show a composition bias toward polar residues. Low complexity-rich tracts occupy residues 878-909 (SSSL…ASSS) and 965-977 (PAVV…SPPV). Positions 1007 to 1066 (DDEEYAAILKQKQQLEAKEKERKLAKQKQKQARLDKIKKEMEEIKRRQAEAEAEEDSDEE) form a coiled coil. Basic and acidic residues-rich tracts occupy residues 1019–1030 (QQLEAKEKERKL) and 1038–1056 (ARLD…RQAE). Over residues 1057 to 1067 (AEAEEDSDEEP) the composition is skewed to acidic residues. Polar residues-rich tracts occupy residues 1070–1079 (VPTYTVSNSA) and 1118–1134 (NPFS…STNP). Positions 1139–1149 (TTKESTIDPKK) are enriched in basic and acidic residues. The segment covering 1154–1166 (RASQRGLSKNDGW) has biased composition (polar residues). Residues 1167–1177 (SDSDDNESEDD) are compositionally biased toward acidic residues. The segment covering 1250-1326 (PPIPTEVPPI…PPPPGPPPPV (77 aa)) has biased composition (pro residues). A WH2 domain is found at 1338 to 1355 (DIGALLGQIQGGKSLKKV). The segment covering 1357–1373 (ASQQKISSNDLAGTVLS) has biased composition (polar residues).

The protein belongs to the PAN1 family. Component of the PAN1 actin cytoskeleton-regulatory complex.

The protein resides in the cell membrane. It localises to the endosome membrane. Its subcellular location is the cytoplasm. It is found in the cytoskeleton. The protein localises to the actin patch. Functionally, component of the PAN1 actin cytoskeleton-regulatory complex required for the internalization of endosomes during actin-coupled endocytosis. The complex links the site of endocytosis to the cell membrane-associated actin cytoskeleton. Mediates uptake of external molecules and vacuolar degradation of plasma membrane proteins. Plays a role in the proper organization of the cell membrane-associated actin cytoskeleton and promotes its destabilization. In Scheffersomyces stipitis (strain ATCC 58785 / CBS 6054 / NBRC 10063 / NRRL Y-11545) (Yeast), this protein is Actin cytoskeleton-regulatory complex protein PAN1 (PAN1).